Reading from the N-terminus, the 411-residue chain is Citrate synthase (411 aa).

Catalysis depends on residues H304 and D363.

This sequence belongs to the citrate synthase family.

The enzyme catalyses oxaloacetate + acetyl-CoA + H2O = citrate + CoA + H(+). It participates in carbohydrate metabolism; tricarboxylic acid cycle; isocitrate from oxaloacetate: step 1/2. This is Citrate synthase (gltA) from Rickettsia parkeri.